A 675-amino-acid chain; its full sequence is Acetyl-coenzyme A synthetase 2 (675 aa).

CoA contacts are provided by residues 206 to 209 (RGGK) and Thr-325. Residues 401–403 (GEP), 425–430 (DTMWQT), Asp-516, and Arg-531 contribute to the ATP site. Ser-539 contributes to the CoA binding site. Arg-542 is an ATP binding site. Residue Arg-604 participates in CoA binding.

Belongs to the ATP-dependent AMP-binding enzyme family.

It carries out the reaction acetate + ATP + CoA = acetyl-CoA + AMP + diphosphate. The protein is Acetyl-coenzyme A synthetase 2 (ACS2) of Zygosaccharomyces bailii.